Consider the following 535-residue polypeptide: CTP synthase (535 aa).

Residues methionine 1–leucine 267 form an amidoligase domain region. Serine 13 lines the CTP pocket. Residue serine 13 participates in UTP binding. ATP is bound at residue serine 14–isoleucine 19. Residue tyrosine 54 coordinates L-glutamine. Aspartate 71 is an ATP binding site. Mg(2+) contacts are provided by aspartate 71 and glutamate 141. CTP-binding positions include aspartate 148–glutamate 150, lysine 188–glutamine 193, and lysine 224. UTP is bound by residues lysine 188 to glutamine 193 and lysine 224. Position 240-242 (arginine 240–alanine 242) interacts with ATP. Positions lysine 292–serine 534 constitute a Glutamine amidotransferase type-1 domain. Glycine 354 serves as a coordination point for L-glutamine. The active-site Nucleophile; for glutamine hydrolysis is the cysteine 381. L-glutamine-binding positions include leucine 382–glutamine 385, glutamate 405, and arginine 462. Catalysis depends on residues histidine 507 and glutamate 509.

This sequence belongs to the CTP synthase family. As to quaternary structure, homotetramer.

It catalyses the reaction UTP + L-glutamine + ATP + H2O = CTP + L-glutamate + ADP + phosphate + 2 H(+). The enzyme catalyses L-glutamine + H2O = L-glutamate + NH4(+). The catalysed reaction is UTP + NH4(+) + ATP = CTP + ADP + phosphate + 2 H(+). Its pathway is pyrimidine metabolism; CTP biosynthesis via de novo pathway; CTP from UDP: step 2/2. Its activity is regulated as follows. Allosterically activated by GTP, when glutamine is the substrate; GTP has no effect on the reaction when ammonia is the substrate. The allosteric effector GTP functions by stabilizing the protein conformation that binds the tetrahedral intermediate(s) formed during glutamine hydrolysis. Inhibited by the product CTP, via allosteric rather than competitive inhibition. Its function is as follows. Catalyzes the ATP-dependent amination of UTP to CTP with either L-glutamine or ammonia as the source of nitrogen. Regulates intracellular CTP levels through interactions with the four ribonucleotide triphosphates. This chain is CTP synthase, found in Bacillus thuringiensis subsp. konkukian (strain 97-27).